Consider the following 345-residue polypeptide: 3-isopropylmalate dehydrogenase (345 aa).

76–87 (GPKYDNAPVRPE) contacts NAD(+). 4 residues coordinate substrate: arginine 94, arginine 104, arginine 132, and aspartate 216. The Mg(2+) site is built by aspartate 216, aspartate 240, and aspartate 244. 274–286 (GSAPDIAGQGIAN) contacts NAD(+).

This sequence belongs to the isocitrate and isopropylmalate dehydrogenases family. LeuB type 1 subfamily. As to quaternary structure, homodimer. The cofactor is Mg(2+). Mn(2+) serves as cofactor.

The protein resides in the cytoplasm. It catalyses the reaction (2R,3S)-3-isopropylmalate + NAD(+) = 4-methyl-2-oxopentanoate + CO2 + NADH. It functions in the pathway amino-acid biosynthesis; L-leucine biosynthesis; L-leucine from 3-methyl-2-oxobutanoate: step 3/4. Catalyzes the oxidation of 3-carboxy-2-hydroxy-4-methylpentanoate (3-isopropylmalate) to 3-carboxy-4-methyl-2-oxopentanoate. The product decarboxylates to 4-methyl-2 oxopentanoate. This Streptococcus thermophilus (strain CNRZ 1066) protein is 3-isopropylmalate dehydrogenase.